A 217-amino-acid chain; its full sequence is Pyridoxine/pyridoxamine 5'-phosphate oxidase (217 aa).

Residues 13 to 16 and Lys71 each bind substrate; that span reads RREY. Residues 66–71, 81–82, Arg87, Lys88, and Gln110 each bind FMN; these read RIVLLK and YT. Tyr128, Arg132, and Ser136 together coordinate substrate. Residues 145–146 and Trp190 each bind FMN; that span reads QS. 196–198 is a binding site for substrate; the sequence is RLH. An FMN-binding site is contributed by Arg200.

Belongs to the pyridoxamine 5'-phosphate oxidase family. In terms of assembly, homodimer. Requires FMN as cofactor.

The enzyme catalyses pyridoxamine 5'-phosphate + O2 + H2O = pyridoxal 5'-phosphate + H2O2 + NH4(+). It catalyses the reaction pyridoxine 5'-phosphate + O2 = pyridoxal 5'-phosphate + H2O2. Its pathway is cofactor metabolism; pyridoxal 5'-phosphate salvage; pyridoxal 5'-phosphate from pyridoxamine 5'-phosphate: step 1/1. It functions in the pathway cofactor metabolism; pyridoxal 5'-phosphate salvage; pyridoxal 5'-phosphate from pyridoxine 5'-phosphate: step 1/1. Functionally, catalyzes the oxidation of either pyridoxine 5'-phosphate (PNP) or pyridoxamine 5'-phosphate (PMP) into pyridoxal 5'-phosphate (PLP). The chain is Pyridoxine/pyridoxamine 5'-phosphate oxidase from Yersinia pestis bv. Antiqua (strain Antiqua).